We begin with the raw amino-acid sequence, 104 residues long: Secretoglobin family 3A member 1 (104 aa).

A signal peptide spans 1–20 (MKLAALLGLCVALSCSSAAA).

The protein belongs to the secretoglobin family. UGRP subfamily. Homodimer; disulfide-linked. Highly expressed in lung and prostate. Also found in mammary gland, spleen, pancreas, testis and liver. Detected throughout the airway epithelium in lung, with highest expression in large airways. Found in lung submucosal glands where it localizes to acinar and ductile cells. Not detected in respiratory bronchioles, alveolar ducts or alveolar epithelium. In mammary gland, specifically localizes to luminal epithelial cells.

It localises to the secreted. In terms of biological role, secreted cytokine-like protein. Inhibits cell growth in vitro. In Homo sapiens (Human), this protein is Secretoglobin family 3A member 1 (SCGB3A1).